The sequence spans 61 residues: Small ribosomal subunit protein uS14 (61 aa).

Positions 24, 27, 40, and 43 each coordinate Zn(2+).

It belongs to the universal ribosomal protein uS14 family. Zinc-binding uS14 subfamily. In terms of assembly, part of the 30S ribosomal subunit. Contacts proteins S3 and S10. It depends on Zn(2+) as a cofactor.

In terms of biological role, binds 16S rRNA, required for the assembly of 30S particles and may also be responsible for determining the conformation of the 16S rRNA at the A site. In Endomicrobium trichonymphae, this protein is Small ribosomal subunit protein uS14.